A 272-amino-acid polypeptide reads, in one-letter code: Dermonecrotic toxin LvSicTox-alphaIC1biii (272 aa).

Histidine 5 is a catalytic residue. Mg(2+) is bound by residues glutamate 25 and aspartate 27. The active-site Nucleophile is the histidine 41. 2 cysteine pairs are disulfide-bonded: cysteine 45-cysteine 51 and cysteine 47-cysteine 189. Residue aspartate 84 participates in Mg(2+) binding.

It belongs to the arthropod phospholipase D family. Class II subfamily. It depends on Mg(2+) as a cofactor. Expressed by the venom gland.

The protein localises to the secreted. It catalyses the reaction an N-(acyl)-sphingosylphosphocholine = an N-(acyl)-sphingosyl-1,3-cyclic phosphate + choline. It carries out the reaction an N-(acyl)-sphingosylphosphoethanolamine = an N-(acyl)-sphingosyl-1,3-cyclic phosphate + ethanolamine. The enzyme catalyses a 1-acyl-sn-glycero-3-phosphocholine = a 1-acyl-sn-glycero-2,3-cyclic phosphate + choline. The catalysed reaction is a 1-acyl-sn-glycero-3-phosphoethanolamine = a 1-acyl-sn-glycero-2,3-cyclic phosphate + ethanolamine. Its function is as follows. Dermonecrotic toxins cleave the phosphodiester linkage between the phosphate and headgroup of certain phospholipids (sphingolipid and lysolipid substrates), forming an alcohol (often choline) and a cyclic phosphate. This toxin acts on sphingomyelin (SM). It may also act on ceramide phosphoethanolamine (CPE), lysophosphatidylcholine (LPC) and lysophosphatidylethanolamine (LPE), but not on lysophosphatidylserine (LPS), and lysophosphatidylglycerol (LPG). It acts by transphosphatidylation, releasing exclusively cyclic phosphate products as second products. Induces dermonecrosis, hemolysis, increased vascular permeability, edema, inflammatory response, and platelet aggregation. In Loxosceles variegata (Recluse spider), this protein is Dermonecrotic toxin LvSicTox-alphaIC1biii.